A 269-amino-acid chain; its full sequence is 4-hydroxy-tetrahydrodipicolinate reductase (269 aa).

NAD(+) is bound by residues 11 to 16 and E37; that span reads GASGRM. NADP(+) is bound at residue R38. NAD(+) contacts are provided by residues 101 to 103 and 125 to 128; these read GTT and AGNM. Catalysis depends on H158, which acts as the Proton donor/acceptor. H159 is a binding site for (S)-2,3,4,5-tetrahydrodipicolinate. K162 serves as the catalytic Proton donor. Residue 168–169 coordinates (S)-2,3,4,5-tetrahydrodipicolinate; it reads GT.

Belongs to the DapB family.

It is found in the cytoplasm. The enzyme catalyses (S)-2,3,4,5-tetrahydrodipicolinate + NAD(+) + H2O = (2S,4S)-4-hydroxy-2,3,4,5-tetrahydrodipicolinate + NADH + H(+). It catalyses the reaction (S)-2,3,4,5-tetrahydrodipicolinate + NADP(+) + H2O = (2S,4S)-4-hydroxy-2,3,4,5-tetrahydrodipicolinate + NADPH + H(+). It participates in amino-acid biosynthesis; L-lysine biosynthesis via DAP pathway; (S)-tetrahydrodipicolinate from L-aspartate: step 4/4. Functionally, catalyzes the conversion of 4-hydroxy-tetrahydrodipicolinate (HTPA) to tetrahydrodipicolinate. In Ruegeria sp. (strain TM1040) (Silicibacter sp.), this protein is 4-hydroxy-tetrahydrodipicolinate reductase.